The primary structure comprises 932 residues: MNFIKKVIGGGSSKSKTDIKIEDEQHEQQHEQQHEKQQIPDKISTSKVNSPCVPPTCTYISKENVRSDLSLIKDFNSAYYYNYYRTLEKNSTNLLTSPGLNTKVVSNQFTLKEFNIVSEMTDSCIVSVWTQKYSNLSLTPVEAVYQIPLAPYATVSDFSVILKDKVLKGKIKENEKAKEKYNDAIASGGQAFLAEKVEGFFKLQIGNLPPQEDVTVNITITSEIGTHLESLHFCLHRFIFPKSAFKFNYTLNASLSTPIETIEMDHFQPTITYKDESKTNATVTISTENGVSNNIIAIIVPKYSEKPESFIEYSPIDKSYALAINFYPKFSVGLDEVDQKSEFIFVLDCSGSMSGKPIEKSKMALEICMRSLNENSKFNIVCFGSNFNKLFETSKHYNDETLQKASEYINRIDANLGGTELLEPIVDILSKESDPEFPRQVFILTDGEISNRDKLIDYVGKEANTTRIFTYGIGSYVDKELIVGVSKACKGYYEMIVDNSDMEEKVMKLISIAMQPTLSNIKVDWGVLSNVVQSPAQIRPLFNQERMMIYATLDKEPTEKQVTVILSGNGPLSERISFPVDLDFSKANQSTSHIHTLSAFKHIQDLEESERKEKKDNKDKIVKLGKRFGLVSKHTSYIVTADSDKVTEETMKTVQVLEPTQQINTSPGSGSGFIPTTRVQGSSSVFPSSPTPLSGPSPYTVCAPPPPPPTSSPYTNCAPPPPQFSRCIAPQPYQSAPAPPAPPAPSRLSQAQSQMDYCDQELLCESLEGDLLVEEEELECKEIECSPPQKLSYITPFAPTSQISQSSRECRSKKSSSPTIQKSSSLPSRPSTSSSSLIEIIRQQKANGSFTKSSVSSFINVDTPPPSSDIPEDVWTTLLIIANFILNFDSQKSQWELVSQKATKFVKQQIIKSSIASTFETLLESAKKSISN.

The segment at 1-49 (MNFIKKVIGGGSSKSKTDIKIEDEQHEQQHEQQHEKQQIPDKISTSKVN) is disordered. The segment covering 15–39 (SKTDIKIEDEQHEQQHEQQHEKQQI) has biased composition (basic and acidic residues). Positions 95–222 (LTSPGLNTKV…DVTVNITITS (128 aa)) constitute a VIT domain. The VWFA domain occupies 342 to 521 (EFIFVLDCSG…IAMQPTLSNI (180 aa)). 2 disordered regions span residues 661-752 (QQIN…SQAQ) and 800-834 (TSQI…STSS). A compositionally biased stretch (polar residues) spans 677 to 686 (TRVQGSSSVF). The segment covering 815–834 (SSSPTIQKSSSLPSRPSTSS) has biased composition (low complexity).

The polypeptide is von Willebrand factor A domain-containing protein DDB_G0292028 (Dictyostelium discoideum (Social amoeba)).